The primary structure comprises 141 residues: ATP synthase epsilon chain (141 aa).

It belongs to the ATPase epsilon chain family. F-type ATPases have 2 components, CF(1) - the catalytic core - and CF(0) - the membrane proton channel. CF(1) has five subunits: alpha(3), beta(3), gamma(1), delta(1), epsilon(1). CF(0) has three main subunits: a, b and c.

It localises to the cell membrane. Functionally, produces ATP from ADP in the presence of a proton gradient across the membrane. The chain is ATP synthase epsilon chain from Lactococcus lactis subsp. cremoris (strain MG1363).